Reading from the N-terminus, the 102-residue chain is ATP-dependent Clp protease adapter protein ClpS (102 aa).

Belongs to the ClpS family. In terms of assembly, binds to the N-terminal domain of the chaperone ClpA.

Its function is as follows. Involved in the modulation of the specificity of the ClpAP-mediated ATP-dependent protein degradation. The polypeptide is ATP-dependent Clp protease adapter protein ClpS (Shewanella denitrificans (strain OS217 / ATCC BAA-1090 / DSM 15013)).